Consider the following 305-residue polypeptide: MSASVQSWTDRLDGKQAADVSALLERATAADGTAPVSEQGVHAVSGAGSDGVRHLVETDADRIVGYAQLQPGRGDHPAMAELAVDPAARGRGIGGRLVAEVLSEGGPDARVWAHGNLPAAQAVAQRLGLIGARELLQLRRPLADAELPELVVPEDISLRVYRGVEDDPEVLRVNAAAFAWHPEQGSWTERELAERRAEAWFDPSGLFMAFAASDDQRLLGFHWTKVHPKQGDEPAIGEVYVVAIGPDAQGRGLGRLLTLAGLHYLRDRGLGAVLLYVEGDNESALHTYDRLGFERFHTDVAYARA.

2 N-acetyltransferase domains span residues aspartate 10–proline 153 and isoleucine 156–alanine 305. 1D-myo-inositol 2-(L-cysteinylamino)-2-deoxy-alpha-D-glucopyranoside is bound at residue glutamate 38. Acetyl-CoA is bound at residue leucine 82–valine 84. The 1D-myo-inositol 2-(L-cysteinylamino)-2-deoxy-alpha-D-glucopyranoside site is built by glutamate 183, lysine 225, and glutamate 238. Residues valine 242–isoleucine 244 and glutamine 249–arginine 255 contribute to the acetyl-CoA site. Tyrosine 276 serves as a coordination point for 1D-myo-inositol 2-(L-cysteinylamino)-2-deoxy-alpha-D-glucopyranoside. Asparagine 281–histidine 286 provides a ligand contact to acetyl-CoA.

The protein belongs to the acetyltransferase family. MshD subfamily. As to quaternary structure, monomer.

The enzyme catalyses 1D-myo-inositol 2-(L-cysteinylamino)-2-deoxy-alpha-D-glucopyranoside + acetyl-CoA = mycothiol + CoA + H(+). Catalyzes the transfer of acetyl from acetyl-CoA to desacetylmycothiol (Cys-GlcN-Ins) to form mycothiol. The protein is Mycothiol acetyltransferase of Rhodococcus jostii (strain RHA1).